A 146-amino-acid polypeptide reads, in one-letter code: MKYNREEFEEVIVNIGRVTKVVKGGRKFRFTALVVVGNRKGLVGYGFGKSKEVPDAIKKAVDDAFKNIIDVKLNGSTIAHDIEVKYNASKILLKPASEGTGVIAGGSVRPVLELVGIKDILTKSLGSNNSSNVVRATIKALSMLKN.

Residues 8-71 enclose the S5 DRBM domain; the sequence is FEEVIVNIGR…DDAFKNIIDV (64 aa).

The protein belongs to the universal ribosomal protein uS5 family. Part of the 30S ribosomal subunit. Contacts proteins S4 and S8.

Its function is as follows. With S4 and S12 plays an important role in translational accuracy. Located at the back of the 30S subunit body where it stabilizes the conformation of the head with respect to the body. This Campylobacter hominis (strain ATCC BAA-381 / DSM 21671 / CCUG 45161 / LMG 19568 / NCTC 13146 / CH001A) protein is Small ribosomal subunit protein uS5.